We begin with the raw amino-acid sequence, 78 residues long: Acyl carrier protein (78 aa).

The region spanning aspartate 2 to lysine 77 is the Carrier domain. An O-(pantetheine 4'-phosphoryl)serine modification is found at serine 37.

The protein belongs to the acyl carrier protein (ACP) family. 4'-phosphopantetheine is transferred from CoA to a specific serine of apo-ACP by AcpS. This modification is essential for activity because fatty acids are bound in thioester linkage to the sulfhydryl of the prosthetic group.

Its subcellular location is the cytoplasm. The protein operates within lipid metabolism; fatty acid biosynthesis. Its function is as follows. Carrier of the growing fatty acid chain in fatty acid biosynthesis. This chain is Acyl carrier protein, found in Dechloromonas aromatica (strain RCB).